The sequence spans 292 residues: Xyloglucan endotransglucosylase/hydrolase protein A (292 aa).

The N-terminal stretch at 1–20 (MGSSLWTCLILLSLASASFA) is a signal peptide. A GH16 domain is found at 21–219 (ANPRTPIDVP…WSKAPFIASY (199 aa)). Residue Glu-105 is the Nucleophile of the active site. Glu-109 functions as the Proton donor in the catalytic mechanism. Position 109 (Glu-109) interacts with xyloglucan. The N-linked (GlcNAc...) asparagine glycan is linked to Asn-113. Residues 122–124 (QTN), 132–134 (DRE), 198–199 (DW), and Gly-203 each bind xyloglucan. 2 disulfides stabilise this stretch: Cys-227–Cys-236 and Cys-273–Cys-286. A xyloglucan-binding site is contributed by Arg-278.

The protein belongs to the glycosyl hydrolase 16 family. XTH group 1 subfamily. In terms of processing, contains at least one intrachain disulfide bond essential for its enzymatic activity. In terms of tissue distribution, predominantly expressed in the phloem fibers of growing internodes. Expressed in xylem cells in the basal part of the internode. In the internode, it is expressed closer to the top of the internode compared to XTHB.

It is found in the secreted. It localises to the cell wall. The protein localises to the extracellular space. Its subcellular location is the apoplast. It catalyses the reaction breaks a beta-(1-&gt;4) bond in the backbone of a xyloglucan and transfers the xyloglucanyl segment on to O-4 of the non-reducing terminal glucose residue of an acceptor, which can be a xyloglucan or an oligosaccharide of xyloglucan.. In terms of biological role, catalyzes xyloglucan endohydrolysis (XEH) and/or endotransglycosylation (XET). Cleaves and religates xyloglucan polymers, an essential constituent of the primary cell wall, and thereby participates in cell wall construction of growing tissues. This chain is Xyloglucan endotransglucosylase/hydrolase protein A (XTHA), found in Phaseolus angularis (Azuki bean).